Here is a 379-residue protein sequence, read N- to C-terminus: Demethylspheroidene O-methyltransferase (379 aa).

Aspartate 235 and arginine 279 together coordinate S-adenosyl-L-methionine.

Belongs to the class I-like SAM-binding methyltransferase superfamily. Cation-independent O-methyltransferase family.

It catalyses the reaction demethylspheroidene + S-adenosyl-L-methionine = spheroidene + S-adenosyl-L-homocysteine + H(+). It participates in carotenoid biosynthesis; spheroidene biosynthesis. Functionally, methyltransferase that mediates the O-methylation of 1-hydroxy carotenoids. Converts hydroxyneurosporene to methoxyneurosporene or demethylspheroidene to spheroidene. Also able to produce spirilloxanthin. This is Demethylspheroidene O-methyltransferase (crtF) from Cereibacter sphaeroides (strain ATCC 17023 / DSM 158 / JCM 6121 / CCUG 31486 / LMG 2827 / NBRC 12203 / NCIMB 8253 / ATH 2.4.1.) (Rhodobacter sphaeroides).